A 624-amino-acid chain; its full sequence is Adenine deaminase 1 (624 aa).

This sequence belongs to the metallo-dependent hydrolases superfamily. Adenine deaminase family. Mn(2+) is required as a cofactor.

The enzyme catalyses adenine + H2O + H(+) = hypoxanthine + NH4(+). The polypeptide is Adenine deaminase 1 (Bradyrhizobium sp. (strain ORS 278)).